Consider the following 235-residue polypeptide: 2-C-methyl-D-erythritol 4-phosphate cytidylyltransferase (235 aa).

Belongs to the IspD/TarI cytidylyltransferase family. IspD subfamily.

It carries out the reaction 2-C-methyl-D-erythritol 4-phosphate + CTP + H(+) = 4-CDP-2-C-methyl-D-erythritol + diphosphate. It participates in isoprenoid biosynthesis; isopentenyl diphosphate biosynthesis via DXP pathway; isopentenyl diphosphate from 1-deoxy-D-xylulose 5-phosphate: step 2/6. Functionally, catalyzes the formation of 4-diphosphocytidyl-2-C-methyl-D-erythritol from CTP and 2-C-methyl-D-erythritol 4-phosphate (MEP). This chain is 2-C-methyl-D-erythritol 4-phosphate cytidylyltransferase, found in Pseudomonas putida (strain ATCC 700007 / DSM 6899 / JCM 31910 / BCRC 17059 / LMG 24140 / F1).